Reading from the N-terminus, the 344-residue chain is Phenylalanine--tRNA ligase alpha subunit (344 aa).

Glu-256 contributes to the Mg(2+) binding site.

Belongs to the class-II aminoacyl-tRNA synthetase family. Phe-tRNA synthetase alpha subunit type 1 subfamily. As to quaternary structure, tetramer of two alpha and two beta subunits. The cofactor is Mg(2+).

Its subcellular location is the cytoplasm. It catalyses the reaction tRNA(Phe) + L-phenylalanine + ATP = L-phenylalanyl-tRNA(Phe) + AMP + diphosphate + H(+). This Oceanobacillus iheyensis (strain DSM 14371 / CIP 107618 / JCM 11309 / KCTC 3954 / HTE831) protein is Phenylalanine--tRNA ligase alpha subunit.